The sequence spans 927 residues: F-box only protein 11 (927 aa).

A disordered region spans residues 1-132 (MNSVRAANRR…STSTTENFGH (132 aa)). Residues 7-16 (ANRRPRRVSR) are compositionally biased toward basic residues. The span at 17–27 (PRPVQQQQQQP) shows a compositional bias: low complexity. Residues 28 to 68 (PQQPPPQPPQQQPPQQQPPPPPQQQQQQQPPPPPPPPPPLP) show a composition bias toward pro residues. A compositionally biased stretch (polar residues) spans 114–129 (PTKNSMEGASTSTTEN). An F-box domain is found at 153-199 (QYLQEKLPDEVVLKIFSYLLEQDLCRAACVCKRFSELANDPILWKRL). PbH1 repeat units follow at residues 395–417 (GACPTIKHCNISDCENVGLYITD), 418–440 (HAQGIYEDNEISNNALAGIWVKN), 441–463 (HGNPIIRRNHIHHGRDVGVFTFD), 464–486 (HGMGYFESCNIHRNRIAGFEVKA), 487–509 (YANPTVVRCEIHHGQTGGIYVHE), 510–532 (KGRGQFIENKIYANNFAGVWITS), 533–555 (NSDPTIRGNSIFNGNQGGVYIFG), 556–578 (DGRGLIEGNDIYGNALAGIQIRT), 579–601 (NSCPIVRHNKIHDGQHGGIYVHE), 602–624 (KGQGVIEENEVYSNTLAGVWVTT), 625–647 (GSTPVLRRNRIHSGKQVGVYFYD), 648–670 (NGHGVLEDNDIYNHMYSGVQIRT), 671–693 (GSNPKIRRNKIWGGQNGGILVYN), 694–716 (SGLGCIEDNEIFDNAMAGVWIKT), 717–739 (DSNPTLRRNKIHDGRDGGICIFN), 740–762 (GGRGLLEENDIFRNAQAGVLIST), 763–785 (NSHPILRKNRIFDGFAAGIEITN), 786–808 (HATATLEGNQIFNNRFGGLFLAS), and 809–830 (GVNVTMKDNKIMNNQDAIEKAV). A UBR-type zinc finger spans residues 833–904 (GQCLYKISSY…LSNPCTLAGE (72 aa)).

Component of the SCF(FBXO11) complex consisting of CUL1, RBX1, SKP1 and FBXO11. Interacts with CIITA. As to expression, isoform 5 is expressed in keratinocytes, fibroblasts and melanocytes.

Its subcellular location is the nucleus. The protein localises to the chromosome. It participates in protein modification; protein ubiquitination. Functionally, substrate recognition component of a SCF (SKP1-CUL1-F-box protein) E3 ubiquitin-protein ligase complex which mediates the ubiquitination and subsequent proteasomal degradation of target proteins, such as DTL/CDT2, BCL6, SNAI1 and PRDM1/BLIMP1. The SCF(FBXO11) complex mediates ubiquitination and degradation of BCL6, thereby playing a role in the germinal center B-cells terminal differentiation toward memory B-cells and plasma cells. The SCF(FBXO11) complex also mediates ubiquitination and degradation of DTL, an important step for the regulation of TGF-beta signaling, cell migration and the timing of the cell-cycle progression and exit. The SCF(FBXO11) complex also catalyzes ubiquitination and degradation of GSK3B-phosphorylated SNAI1. Binds to and neddylates phosphorylated p53/TP53, inhibiting its transcriptional activity. Plays a role in the regulatiom of erythropoiesis but not myelopoiesis or megakaryopoiesis. Mechanistically, activates erythroid genes by mediating the degradation of BAHD1, a heterochromatin-associated protein that recruits corepressors to H3K27me3 marks. Participates in macrophage cell death and inflammation in response to bacterial toxins by regulating the expression of complement 5a receptor 1/C5AR1 and IL-1beta. Acts as a critical regulator to determine the level of MHC-II by mediating the recognition of degron at the P/S/T domain of CIITA leading to its ubiquitination and subsequent degradation via the proteasome. Participates in the antiviral repsonse by initiating the activation of TBK1-IRF3-IFN-I axis. Mediates the 'Lys-63'-linked ubiquitination of TRAF3 to strengthen the interaction between TRAF3 and TBK1. In Homo sapiens (Human), this protein is F-box only protein 11.